Here is a 306-residue protein sequence, read N- to C-terminus: Diterpene cyclase eriG (306 aa).

A run of 2 helical transmembrane segments spans residues Ile-13–Ala-33 and Ala-43–Phe-63. The N-linked (GlcNAc...) asparagine glycan is linked to Asn-64. The next 4 helical transmembrane spans lie at Phe-115–Gly-135, Ile-161–Leu-181, Leu-213–Phe-233, and Met-265–Leu-285.

It belongs to the UbiA prenyltransferase family. Mg(2+) is required as a cofactor.

The protein resides in the membrane. It carries out the reaction (2E,6E,10E)-geranylgeranyl diphosphate = (-)-cyatha-3,12-diene + diphosphate. The protein operates within secondary metabolite biosynthesis. Its activity is regulated as follows. EDTA completely blocks the reaction. Diterpene cyclase; part of the gene cluster that mediates the biosynthesis of erinacines, cyathane-xylosides that show unique biological activities, including leishmanicidal activity, stimulating activity for nerve growth-factor synthesis, and agonistic activity toward the kappa opioid receptor. Within the pathway, eriG acts as a diterpene cyclase that converts geranylgeranyl diphosphate (GGPP) into cyatha-3,12-diene. EriG is unable to use geranyl diphosphate (GPP) or farnesyl diphosphate (FPP) as substrates. The first step of the erinacines biosynthesis pathway is catalyzed by the geranylgeranyl diphosphate (GGPP) synthase eriE via conversion of farnesyl pyrophosphate and isopentyl pyrophosphate into geranylgeranyl pyrophosphate (GGPP). GGPP is then substrate of the diterpene cyclase eriG for the production of cyatha-3,12-diene. The cytochrome P450 monooxygenase eriI then hydroxylates cyatha-3,12-diene at C-14 of the seven-membered ring to produce erinacol, which is further hydroxylated at C-15 by the cytochrome P450 monooxygenase eriC to yield cyathadiol. The cytochrome P450 monooxygenase eriA then catalyzes C-11 hydroxylation in the presence of the short chain dehydrogenase/reductase (SDR) eriH, which leads to the production of cyathatriol. The acetyltransferase eriL converts cyathatriol into 11-O-acetyl-cyathatriol. The SDR eriH catalyzes further oxidation of 11-O-acetyl-cyathatriol into 1-O-acetylcyathin A3. Finally, the glycosyl transferase eriJ tranfers xylose from UDP-xylose onto C-14 of 11-O-acetyl-cyathatriol to form eracine Q. EriJ is also able to convert 11-O-acetyl-cyathatriol to eracine Q2 by using UDP-D-glucose as cosubstrate, but at a lower rate. The protein is Diterpene cyclase eriG of Hericium erinaceus (Lion's mane mushroom).